The sequence spans 382 residues: 1-deoxy-D-xylulose 5-phosphate reductoisomerase (382 aa).

Residues Thr10, Gly11, Ser12, Ile13, Gly36, Lys37, Asn38, and Asn121 each coordinate NADPH. Residue Lys122 coordinates 1-deoxy-D-xylulose 5-phosphate. Glu123 is an NADPH binding site. Asp147 provides a ligand contact to Mn(2+). Residues Ser148, Glu149, Ser173, and His196 each contribute to the 1-deoxy-D-xylulose 5-phosphate site. Glu149 provides a ligand contact to Mn(2+). Gly202 contacts NADPH. Residues Ser209, Asn214, Lys215, and Glu218 each coordinate 1-deoxy-D-xylulose 5-phosphate. Glu218 contacts Mn(2+).

The protein belongs to the DXR family. It depends on Mg(2+) as a cofactor. Mn(2+) serves as cofactor.

It carries out the reaction 2-C-methyl-D-erythritol 4-phosphate + NADP(+) = 1-deoxy-D-xylulose 5-phosphate + NADPH + H(+). Its pathway is isoprenoid biosynthesis; isopentenyl diphosphate biosynthesis via DXP pathway; isopentenyl diphosphate from 1-deoxy-D-xylulose 5-phosphate: step 1/6. Functionally, catalyzes the NADPH-dependent rearrangement and reduction of 1-deoxy-D-xylulose-5-phosphate (DXP) to 2-C-methyl-D-erythritol 4-phosphate (MEP). The protein is 1-deoxy-D-xylulose 5-phosphate reductoisomerase of Halalkalibacterium halodurans (strain ATCC BAA-125 / DSM 18197 / FERM 7344 / JCM 9153 / C-125) (Bacillus halodurans).